A 476-amino-acid chain; its full sequence is Ribulose bisphosphate carboxylase large chain (476 aa).

The propeptide occupies 1–2 (MS). P3 carries the post-translational modification N-acetylproline. K14 bears the N6,N6,N6-trimethyllysine mark. N123 and T173 together coordinate substrate. K175 (proton acceptor) is an active-site residue. Residue K177 participates in substrate binding. Residues K201, D203, and E204 each coordinate Mg(2+). At K201 the chain carries N6-carboxylysine. H294 serves as the catalytic Proton acceptor. 3 residues coordinate substrate: R295, H327, and S379.

It belongs to the RuBisCO large chain family. Type I subfamily. Heterohexadecamer of 8 large chains and 8 small chains; disulfide-linked. The disulfide link is formed within the large subunit homodimers. It depends on Mg(2+) as a cofactor. The disulfide bond which can form in the large chain dimeric partners within the hexadecamer appears to be associated with oxidative stress and protein turnover.

It localises to the plastid. The protein resides in the chloroplast. It catalyses the reaction 2 (2R)-3-phosphoglycerate + 2 H(+) = D-ribulose 1,5-bisphosphate + CO2 + H2O. The enzyme catalyses D-ribulose 1,5-bisphosphate + O2 = 2-phosphoglycolate + (2R)-3-phosphoglycerate + 2 H(+). Functionally, ruBisCO catalyzes two reactions: the carboxylation of D-ribulose 1,5-bisphosphate, the primary event in carbon dioxide fixation, as well as the oxidative fragmentation of the pentose substrate in the photorespiration process. Both reactions occur simultaneously and in competition at the same active site. In Sorghum bicolor (Sorghum), this protein is Ribulose bisphosphate carboxylase large chain.